A 545-amino-acid polypeptide reads, in one-letter code: Indole-3-pyruvate decarboxylase (545 aa).

Glutamate 48 lines the thiamine diphosphate pocket. The tract at residues 382-460 (DCLFTAMDMI…VILFNNASWE (79 aa)) is thiamine pyrophosphate binding. Residues aspartate 429 and asparagine 456 each contribute to the Mg(2+) site.

The protein belongs to the TPP enzyme family. It depends on a metal cation as a cofactor. The cofactor is thiamine diphosphate.

It catalyses the reaction indole-3-pyruvate + H(+) = indole-3-acetaldehyde + CO2. It functions in the pathway plant hormone metabolism; auxin biosynthesis. The chain is Indole-3-pyruvate decarboxylase (ipdC) from Azospirillum brasilense.